Here is a 276-residue protein sequence, read N- to C-terminus: 4-deoxy-L-threo-5-hexosulose-uronate ketol-isomerase (276 aa).

Residues histidine 194, histidine 196, glutamate 201, and histidine 243 each coordinate Zn(2+).

This sequence belongs to the KduI family. Zn(2+) serves as cofactor.

It carries out the reaction 5-dehydro-4-deoxy-D-glucuronate = 3-deoxy-D-glycero-2,5-hexodiulosonate. Its pathway is glycan metabolism; pectin degradation; 2-dehydro-3-deoxy-D-gluconate from pectin: step 4/5. In terms of biological role, catalyzes the isomerization of 5-dehydro-4-deoxy-D-glucuronate to 3-deoxy-D-glycero-2,5-hexodiulosonate. This Caldicellulosiruptor bescii (strain ATCC BAA-1888 / DSM 6725 / KCTC 15123 / Z-1320) (Anaerocellum thermophilum) protein is 4-deoxy-L-threo-5-hexosulose-uronate ketol-isomerase.